Reading from the N-terminus, the 478-residue chain is Endoplasmic reticulum oxidoreductin-1 (478 aa).

An N-terminal signal peptide occupies residues 1–20; it reads MREPLLQLIVLSLIIIVVNT. 6 cysteine pairs are disulfide-bonded: Cys28-Cys41, Cys30-Cys39, Cys79-Cys384, Cys88-Cys93, Cys209-Cys230, and Cys387-Cys390. Residues 117 to 143 are disordered; the sequence is AAVKEEEDDDAEKCADAGNNIDPMDRT. FAD contacts are provided by Arg188, Thr190, and Trp201. 4 residues coordinate FAD: Ser241, His244, Arg283, and Arg295. A glycan (N-linked (GlcNAc...) asparagine) is linked at Asn377. A disordered region spans residues 459–478; that stretch reads ESVMNTAADGPPRKSNKIDL.

The protein belongs to the EROs family. May function both as a monomer and a homodimer. FAD is required as a cofactor.

Its subcellular location is the endoplasmic reticulum membrane. Functionally, oxidoreductase involved in disulfide bond formation in the endoplasmic reticulum. Efficiently reoxidizes pdi-1, the enzyme catalyzing protein disulfide formation, in order to allow pdi-1 to sustain additional rounds of disulfide formation. Following pdi reoxidation, passes its electrons to molecular oxygen via FAD, leading to the production of reactive oxygen species (ROS) in the cell. This is Endoplasmic reticulum oxidoreductin-1 (ero-1) from Caenorhabditis elegans.